Reading from the N-terminus, the 346-residue chain is Sensor protein kinase GraS (346 aa).

2 helical membrane passes run 15–35 (MNWI…SLID) and 43–63 (LFYI…LTYF). In terms of domain architecture, Histidine kinase spans 126 to 332 (EFVHDIKTPV…TVRLIFPLQN (207 aa)).

Interacts with GraX.

It is found in the cell membrane. It catalyses the reaction ATP + protein L-histidine = ADP + protein N-phospho-L-histidine.. Functionally, member of the two-component regulatory system GraR/GraS involved in resistance against cationic antimicrobial peptides (CAMPs). Functions as a sensor protein kinase which phosphorylates GraR through the auxiliary protein GraX. In turn, GraR up-regulates many genes such as adhesins, exoproteins, transporters, toxins, and proteins involved in cell wall synthesis. Down-regulates the expression of many genes involved in RNA and amino acid synthesis or glycolysis. This is Sensor protein kinase GraS (graS) from Staphylococcus aureus (strain MSSA476).